The primary structure comprises 656 residues: Pumilio homology domain family member 6 (656 aa).

The segment at 1-107 (MAPLTKKTNG…GGENGNHTEQ (107 aa)) is disordered. The span at 13–23 (SAKEVSHSEKK) shows a compositional bias: basic and acidic residues. Phosphoserine; by CK2 is present on residues Ser31, Ser34, and Ser35. Residues Ser34 and Ser35 each carry the phosphoserine modification. The span at 52–89 (SDDDDLDDLSTSDSEAEEEADELDISDDSEEHENENEE) shows a compositional bias: acidic residues. The segment covering 90–107 (KEGKDKSEGGENGNHTEQ) has biased composition (basic and acidic residues). Residues 133–483 (RLRVKTPPLP…ELLSKFAPMF (351 aa)) enclose the PUM-HD domain. Pumilio repeat units follow at residues 155 to 191 (ELSKDCISDLVLKHDASRIVQTLVKYSSKDRREQIVD), 192 to 227 (ALKGKFYVLATSAYGKYLLVKLLHYGSRSSRQTIIN), 228 to 264 (ELHGSLRKLMRHREGAYVVEDLFVLYATHEQRQQMIK), 340 to 376 (ELLHEQFAELVHTPEGSDVACTLVARANAKERKLILK), 377 to 413 (ALKNHAEKLIKNEYGNIVFITILNCVDDTVLVFKTFS), and 415 to 450 (TVKEHLQEFIIDKFGRRPWLYILLGLDGKYFSPIVK).

The protein belongs to the PUF6 family. As to quaternary structure, component of the ASH1 mRNP composed of at least PUF6, SHE2, SHE3, SHE1 and the ASH1 mRNA. Interacts with SHE2 and FUN12. In terms of processing, phosphorylation by CK2 relieves translational repression activity.

It is found in the bud tip. The protein localises to the nucleus. It localises to the nucleolus. Functionally, RNA-binding protein involved in post-transcriptional regulation. Component of the ASH1 mRNP which transports the ASH1 mRNA to the distal tip of the bud, where the ASH1 protein is translated and targeted to the daughter cell nucleus. Binds to the ASH1 3'-UTR containing the PUF consensus UUGU segment and represses its translation. This silencing of ASH1 mRNA is critical for asymmetric seggregation of ASH1 to the daughter cell nucleus. The polypeptide is Pumilio homology domain family member 6 (PUF6) (Saccharomyces cerevisiae (strain ATCC 204508 / S288c) (Baker's yeast)).